The following is a 122-amino-acid chain: Large ribosomal subunit protein uL14 (122 aa).

This sequence belongs to the universal ribosomal protein uL14 family. Part of the 50S ribosomal subunit. Forms a cluster with proteins L3 and L19. In the 70S ribosome, L14 and L19 interact and together make contacts with the 16S rRNA in bridges B5 and B8.

Binds to 23S rRNA. Forms part of two intersubunit bridges in the 70S ribosome. The polypeptide is Large ribosomal subunit protein uL14 (Agathobacter rectalis (strain ATCC 33656 / DSM 3377 / JCM 17463 / KCTC 5835 / VPI 0990) (Eubacterium rectale)).